We begin with the raw amino-acid sequence, 90 residues long: Mitochondrial import inner membrane translocase subunit Tim10 (90 aa).

Residues 29 to 54 carry the Twin CX3C motif motif; it reads CHRKCVPPHYKEAELSKGESVCLDRC. 2 disulfides stabilise this stretch: cysteine 29-cysteine 54 and cysteine 33-cysteine 50.

This sequence belongs to the small Tim family. In terms of assembly, heterohexamer; composed of 3 copies of TIMM9 and 3 copies of TIMM10/TIM10A, named soluble 70 kDa complex. The complex forms a 6-bladed alpha-propeller structure and associates with the TIMM22 component of the TIM22 complex. Interacts with multi-pass transmembrane proteins in transit. Also forms a complex composed of TIMM9, TIMM10/TIM10A and FXC1/TIM10B.

The protein localises to the mitochondrion inner membrane. Mitochondrial intermembrane chaperone that participates in the import and insertion of multi-pass transmembrane proteins into the mitochondrial inner membrane. May also be required for the transfer of beta-barrel precursors from the TOM complex to the sorting and assembly machinery (SAM complex) of the outer membrane. Acts as a chaperone-like protein that protects the hydrophobic precursors from aggregation and guide them through the mitochondrial intermembrane space. This chain is Mitochondrial import inner membrane translocase subunit Tim10 (TIMM10), found in Bos taurus (Bovine).